The sequence spans 486 residues: Glutamate--tRNA ligase (486 aa).

The short motif at 12 to 22 (PSPTGTPHVGL) is the 'HIGH' region element. The short motif at 256 to 260 (KLSKR) is the 'KMSKS' region element. Residue K259 participates in ATP binding.

It belongs to the class-I aminoacyl-tRNA synthetase family. Glutamate--tRNA ligase type 1 subfamily. As to quaternary structure, monomer.

The protein resides in the cytoplasm. The catalysed reaction is tRNA(Glu) + L-glutamate + ATP = L-glutamyl-tRNA(Glu) + AMP + diphosphate. In terms of biological role, catalyzes the attachment of glutamate to tRNA(Glu) in a two-step reaction: glutamate is first activated by ATP to form Glu-AMP and then transferred to the acceptor end of tRNA(Glu). The protein is Glutamate--tRNA ligase of Mycolicibacterium smegmatis (strain ATCC 700084 / mc(2)155) (Mycobacterium smegmatis).